Here is a 160-residue protein sequence, read N- to C-terminus: Cell division protein SepF (160 aa).

Residues 18 to 30 (AEGEDDFEDDVDT) are compositionally biased toward acidic residues. Residues 18 to 72 (AEGEDDFEDDVDTGETSFDSDHSVTPMPSSSASASTPSAPREQSNPFQGGRVSRI) form a disordered region. Low complexity predominate over residues 45–57 (PSSSASASTPSAP).

Belongs to the SepF family. Homodimer. Interacts with FtsZ.

The protein resides in the cytoplasm. In terms of biological role, cell division protein that is part of the divisome complex and is recruited early to the Z-ring. Probably stimulates Z-ring formation, perhaps through the cross-linking of FtsZ protofilaments. Its function overlaps with FtsA. The protein is Cell division protein SepF of Bifidobacterium adolescentis (strain ATCC 15703 / DSM 20083 / NCTC 11814 / E194a).